A 496-amino-acid chain; its full sequence is Probable histidine ammonia-lyase (496 aa).

Residues 141-143 (ASG) constitute a cross-link (5-imidazolinone (Ala-Gly)). The residue at position 142 (S142) is a 2,3-didehydroalanine (Ser).

The protein belongs to the PAL/histidase family. In terms of processing, contains an active site 4-methylidene-imidazol-5-one (MIO), which is formed autocatalytically by cyclization and dehydration of residues Ala-Ser-Gly.

Its subcellular location is the cytoplasm. It catalyses the reaction L-histidine = trans-urocanate + NH4(+). Its pathway is amino-acid degradation; L-histidine degradation into L-glutamate; N-formimidoyl-L-glutamate from L-histidine: step 1/3. This Thermoplasma acidophilum (strain ATCC 25905 / DSM 1728 / JCM 9062 / NBRC 15155 / AMRC-C165) protein is Probable histidine ammonia-lyase.